A 522-amino-acid chain; its full sequence is Serine/threonine protein phosphatase 2A 59 kDa regulatory subunit B' gamma isoform (522 aa).

Residues 1 to 74 (MIKQIFGKLP…SSTSSNRTNQ (74 aa)) are disordered. Residues 35–58 (PNSGISSISKPSSKSSASNSNGAN) are compositionally biased toward low complexity. Over residues 63–74 (APSSTSSNRTNQ) the composition is skewed to polar residues.

It belongs to the phosphatase 2A regulatory subunit B56 family. In terms of assembly, PP2A consists of a common heteromeric enzyme, composed of a catalytic subunit (subunits C), a constant regulatory subunit (subunit A), and a variety of regulatory subunits such as subunits B (the R2/B/PR55/B55, R3/B''/PR72/PR130/PR59 and R5/B'/B56 families). Interacts with BRI1. Interacts with IGMT1 and IGMT4. Interacts with ACO3 in the cytosol. In terms of tissue distribution, expressed ubiquitously at low levels. Expressed in roots, emerging lateral roots, cotyledons, leaves, floral stalks and flowers.

It localises to the cytoplasm. The protein resides in the cytosol. It is found in the nucleus. In terms of biological role, the B regulatory subunit may modulate substrate selectivity and catalytic activity, and may also direct the localization of the catalytic enzyme to a particular subcellular compartment. Required for the formation of the PP2A holoenzyme that negatively regulates brassinosteroid signaling by dephosphorylating and inactivating BRI1 in the cytoplasm. Seems to be functionally connected with CPR5 and may mediate the negative regulation of defense reactions and senescence under low irradiances. May contribute to the epigenetic regulation of defense gene expression. Involved in the control of methoxylation of indole glucosinolates and formation of 4-methoxy- indol-3-yl-methyl glucosinolate in leaves, through direct interaction with indole glucosinolate methyltransferases. Involved in growth regulation and stress signaling. Involved in the regulation of reactive oxygen species (ROS) signaling and maintenance of cellular ROS homeostasis. Required to control the level of ACO3 phosphorylation in the cytoplasm. Regulates hydrogen peroxide metabolism by controlling the abundance of AOX1A and AXO3/AOX1D in leaf mitochondria. May mediate dephosphorylation of CRT1 and promote the degradation of unfolded proteins in endoplasmic reticulum (ER). Involved in the regulation of flowering time by repressing FLC, the main flowering repressor gene. This Arabidopsis thaliana (Mouse-ear cress) protein is Serine/threonine protein phosphatase 2A 59 kDa regulatory subunit B' gamma isoform (B'GAMMA).